Consider the following 676-residue polypeptide: Electrogenic aspartate/glutamate antiporter SLC25A13, mitochondrial (676 aa).

Ala-2 bears the N-acetylalanine mark. The segment at 2–295 is regulatory N-terminal domain; the sequence is AAAKVALTKR…TLADIERIAP (294 aa). Over 2–332 the chain is Mitochondrial intermembrane; the sequence is AAAKVALTKR…LLQLAESAYR (331 aa). EF-hand domains lie at 51–86, 87–122, 125–157, and 158–193; these read SQPN…SVLC, APDA…TTIH, IPFN…FLLE, and IQLE…IRPH. The Ca(2+) site is built by Asp-66, Thr-68, Asp-70, Leu-72, and Glu-77. Residues 296–312 are linker loop domain; that stretch reads LEEGMLPFNLAEAQRQQ. A carrier domain region spans residues 322 to 613; that stretch reads FLLQLAESAY…LQRWFYVDFG (292 aa). Solcar repeat units follow at residues 327–419, 427–511, and 519–607; these read AESA…VRDK, VPLL…VKAS, and VSPG…LQRW. Residues 333–350 traverse the membrane as a helical segment; sequence FGLGSIAGAVGATAVYPI. Topologically, residues 351 to 393 are mitochondrial matrix; that stretch reads DLVKTRMQNQRSTGSFVGELMYKNSFDCFKKVLRYEGFFGLYR. 2 positions are modified to N6-acetyllysine: Lys-354 and Lys-373. The helical transmembrane segment at 394–413 threads the bilayer; that stretch reads GLLPQLLGVAPEKAIKLTVN. Topologically, residues 414–436 are mitochondrial intermembrane; that stretch reads DFVRDKFMHKDGSVPLLAEIFAG. The chain crosses the membrane as a helical span at residues 437-450; sequence GCAGGSQVIFTNPL. Over 451 to 485 the chain is Mitochondrial matrix; it reads EIVKIRLQVAGEITTGPRVSALSVVRDLGFFGIYK. At Lys-454 the chain carries N6-methyllysine. The residue at position 485 (Lys-485) is an N6-acetyllysine; alternate. Position 485 is an N6-succinyllysine; alternate (Lys-485). A helical transmembrane segment spans residues 486 to 505; that stretch reads GAKACFLRDIPFSAIYFPCY. At 506–524 the chain is on the mitochondrial intermembrane side; that stretch reads AHVKASFANEDGQVSPGSL. A helical membrane pass occupies residues 525–542; it reads LLAGAIAGMPAASLVTPA. Topologically, residues 543 to 581 are mitochondrial matrix; the sequence is DVIKTRLQVAARAGQTTYSGVTDCFRKILREEGPKALWK. Lys-581 is subject to N6-succinyllysine. The helical transmembrane segment at 582–601 threads the bilayer; sequence GAGARVFRSSPQFGVTLLTY. Residues 602 to 676 lie on the Mitochondrial intermembrane side of the membrane; that stretch reads ELLQRWFYVD…STSKVTAVGS (75 aa). Positions 614–676 are C-terminal domain; the sequence is GVKPVGSELV…STSKVTAVGS (63 aa). The residue at position 663 (Lys-663) is an N6-acetyllysine. Position 667 is a phosphoserine (Ser-667).

The protein belongs to the mitochondrial carrier (TC 2.A.29) family. As to quaternary structure, homodimer (via N-terminus).

The protein resides in the mitochondrion inner membrane. It catalyses the reaction L-aspartate(in) + L-glutamate(out) + H(+)(out) = L-aspartate(out) + L-glutamate(in) + H(+)(in). The catalysed reaction is 3-sulfino-L-alanine(out) + L-glutamate(in) + H(+)(in) = 3-sulfino-L-alanine(in) + L-glutamate(out) + H(+)(out). The enzyme catalyses 3-sulfino-L-alanine(out) + L-aspartate(in) = 3-sulfino-L-alanine(in) + L-aspartate(out). L-aspartate and 3-sulfino-L-alanine uptake are both inhibited by glisoxepide. In terms of biological role, mitochondrial electrogenic aspartate/glutamate antiporter that favors efflux of aspartate and entry of glutamate and proton within the mitochondria as part of the malate-aspartate shuttle. Also mediates the uptake of L-cysteinesulfinate (3-sulfino-L-alanine) by mitochondria in exchange of L-glutamate and proton. Can also exchange L-cysteinesulfinate with aspartate in their anionic form without any proton translocation. Lacks transport activity towards gamma-aminobutyric acid (GABA). The protein is Electrogenic aspartate/glutamate antiporter SLC25A13, mitochondrial of Rattus norvegicus (Rat).